The primary structure comprises 196 residues: Nucleoid occlusion factor SlmA (196 aa).

Residues 7–68 (SNRREEILQA…GLIEFIEEAL (62 aa)) form the HTH tetR-type domain. The H-T-H motif DNA-binding region spans 31–50 (TTVKLAKQVGVSEAALYRHF). Residues 65–142 (EEALMSRINR…QLRQILRERK (78 aa)) adopt a coiled-coil conformation.

It belongs to the nucleoid occlusion factor SlmA family. Homodimer. Interacts with FtsZ.

The protein localises to the cytoplasm. It localises to the nucleoid. Functionally, required for nucleoid occlusion (NO) phenomenon, which prevents Z-ring formation and cell division over the nucleoid. Acts as a DNA-associated cell division inhibitor that binds simultaneously chromosomal DNA and FtsZ, and disrupts the assembly of FtsZ polymers. SlmA-DNA-binding sequences (SBS) are dispersed on non-Ter regions of the chromosome, preventing FtsZ polymerization at these regions. The protein is Nucleoid occlusion factor SlmA of Vibrio atlanticus (strain LGP32) (Vibrio splendidus (strain Mel32)).